A 380-amino-acid chain; its full sequence is Cytochrome b (380 aa).

4 helical membrane-spanning segments follow: residues 34–54 (FGSL…LLAA), 78–99 (WLIR…YLHI), 114–134 (WNTG…GYVL), and 179–199 (FFTL…IHLT). Positions 84 and 98 each coordinate heme b. Residues histidine 183 and histidine 197 each contribute to the heme b site. Histidine 202 contacts a ubiquinone. 4 consecutive transmembrane segments (helical) span residues 227–247 (LKDI…ALFS), 289–309 (LGGV…PLLH), 321–341 (FSQL…WVGS), and 348–368 (FIII…ILFP).

It belongs to the cytochrome b family. In terms of assembly, the cytochrome bc1 complex contains 11 subunits: 3 respiratory subunits (MT-CYB, CYC1 and UQCRFS1), 2 core proteins (UQCRC1 and UQCRC2) and 6 low-molecular weight proteins (UQCRH/QCR6, UQCRB/QCR7, UQCRQ/QCR8, UQCR10/QCR9, UQCR11/QCR10 and a cleavage product of UQCRFS1). This cytochrome bc1 complex then forms a dimer. It depends on heme b as a cofactor.

Its subcellular location is the mitochondrion inner membrane. Its function is as follows. Component of the ubiquinol-cytochrome c reductase complex (complex III or cytochrome b-c1 complex) that is part of the mitochondrial respiratory chain. The b-c1 complex mediates electron transfer from ubiquinol to cytochrome c. Contributes to the generation of a proton gradient across the mitochondrial membrane that is then used for ATP synthesis. This chain is Cytochrome b (MT-CYB), found in Antigone rubicunda (Brolga crane).